The chain runs to 177 residues: Bifunctional protein PyrR (177 aa).

A PRPP-binding motif is present at residues 99–111; that stretch reads VVLVDDVLYTGRT.

This sequence belongs to the purine/pyrimidine phosphoribosyltransferase family. PyrR subfamily. In terms of assembly, homodimer and homohexamer; in equilibrium.

It catalyses the reaction UMP + diphosphate = 5-phospho-alpha-D-ribose 1-diphosphate + uracil. Regulates transcriptional attenuation of the pyrimidine nucleotide (pyr) operon by binding in a uridine-dependent manner to specific sites on pyr mRNA. This disrupts an antiterminator hairpin in the RNA and favors formation of a downstream transcription terminator, leading to a reduced expression of downstream genes. Functionally, also displays a weak uracil phosphoribosyltransferase activity which is not physiologically significant. The chain is Bifunctional protein PyrR from Clostridioides difficile (strain 630) (Peptoclostridium difficile).